The following is a 385-amino-acid chain: Succinate--CoA ligase [ADP-forming] subunit beta (385 aa).

Residues 9 to 244 enclose the ATP-grasp domain; it reads KEILRKYGVP…QDEEDPLETR (236 aa). ATP is bound by residues K46, 53-55, E99, C102, and E107; that span reads GRG. Mg(2+) is bound by residues N199 and D213. Residues N264 and 321–323 contribute to the substrate site; that span reads GIM.

Belongs to the succinate/malate CoA ligase beta subunit family. As to quaternary structure, heterotetramer of two alpha and two beta subunits. Mg(2+) serves as cofactor.

It catalyses the reaction succinate + ATP + CoA = succinyl-CoA + ADP + phosphate. It carries out the reaction GTP + succinate + CoA = succinyl-CoA + GDP + phosphate. It functions in the pathway carbohydrate metabolism; tricarboxylic acid cycle; succinate from succinyl-CoA (ligase route): step 1/1. Functionally, succinyl-CoA synthetase functions in the citric acid cycle (TCA), coupling the hydrolysis of succinyl-CoA to the synthesis of either ATP or GTP and thus represents the only step of substrate-level phosphorylation in the TCA. The beta subunit provides nucleotide specificity of the enzyme and binds the substrate succinate, while the binding sites for coenzyme A and phosphate are found in the alpha subunit. This chain is Succinate--CoA ligase [ADP-forming] subunit beta, found in Rickettsia bellii (strain OSU 85-389).